The sequence spans 344 residues: N-acetyl-gamma-glutamyl-phosphate reductase (344 aa).

Cysteine 149 is a catalytic residue.

It belongs to the NAGSA dehydrogenase family. Type 1 subfamily.

It localises to the cytoplasm. It catalyses the reaction N-acetyl-L-glutamate 5-semialdehyde + phosphate + NADP(+) = N-acetyl-L-glutamyl 5-phosphate + NADPH + H(+). It functions in the pathway amino-acid biosynthesis; L-arginine biosynthesis; N(2)-acetyl-L-ornithine from L-glutamate: step 3/4. Functionally, catalyzes the NADPH-dependent reduction of N-acetyl-5-glutamyl phosphate to yield N-acetyl-L-glutamate 5-semialdehyde. The polypeptide is N-acetyl-gamma-glutamyl-phosphate reductase (Thermoanaerobacter sp. (strain X514)).